The chain runs to 3093 residues: Intermembrane lipid transfer protein VPS13A (3093 aa).

Residues phenylalanine 3–lysine 116 enclose the Chorein N-terminal domain. One copy of the TPR 1 repeat lies at leucine 373–glutamate 406. Position 839 is a phosphoserine (serine 839). The FFAT motif lies at glutamate 842–cysteine 848. Position 1416 is a phosphoserine (serine 1416). The region spanning valine 2209–glycine 2454 is the SHR-BD domain. Residues isoleucine 2860 to phenylalanine 2898 form a TPR 2 repeat. The required for lipid droplet localization stretch occupies residues proline 2953–alanine 3027.

Belongs to the VPS13 family. In terms of assembly, interacts (via FFAT motif) with VAPA and VAPB. Interacts with RAB7A. Interacts with XK.

The protein localises to the mitochondrion outer membrane. It localises to the endoplasmic reticulum membrane. Its subcellular location is the endosome membrane. It is found in the lysosome membrane. The protein resides in the lipid droplet. The protein localises to the golgi apparatus. It localises to the cytoplasmic vesicle. Its subcellular location is the secretory vesicle. It is found in the neuronal dense core vesicle. Mediates the transfer of lipids between membranes at organelle contact sites. Required for the formation or stabilization of ER-mitochondria contact sites which enable transfer of lipids between the ER and mitochondria. Negatively regulates lipid droplet size and motility. Required for efficient lysosomal protein degradation. The chain is Intermembrane lipid transfer protein VPS13A (VPS13A) from Macaca fascicularis (Crab-eating macaque).